Consider the following 152-residue polypeptide: Large ribosomal subunit protein bL9 (152 aa).

It belongs to the bacterial ribosomal protein bL9 family.

Binds to the 23S rRNA. The protein is Large ribosomal subunit protein bL9 of Mycobacterium marinum (strain ATCC BAA-535 / M).